The following is a 453-amino-acid chain: tRNA-2-methylthio-N(6)-dimethylallyladenosine synthase (453 aa).

Residues 4–118 form the MTTase N-terminal domain; that stretch reads KKFYIENYGC…IPNLINNFFK (115 aa). The [4Fe-4S] cluster site is built by C13, C49, C83, C156, C160, and C163. One can recognise a Radical SAM core domain in the interval 142–388; sequence EEKKITAFVT…NLQKTHSYYR (247 aa). One can recognise a TRAM domain in the interval 390–453; it reads RKYIGSIQDI…SATLVGDIYV (64 aa).

This sequence belongs to the methylthiotransferase family. MiaB subfamily. Monomer. [4Fe-4S] cluster is required as a cofactor.

It localises to the cytoplasm. The catalysed reaction is N(6)-dimethylallyladenosine(37) in tRNA + (sulfur carrier)-SH + AH2 + 2 S-adenosyl-L-methionine = 2-methylsulfanyl-N(6)-dimethylallyladenosine(37) in tRNA + (sulfur carrier)-H + 5'-deoxyadenosine + L-methionine + A + S-adenosyl-L-homocysteine + 2 H(+). Its function is as follows. Catalyzes the methylthiolation of N6-(dimethylallyl)adenosine (i(6)A), leading to the formation of 2-methylthio-N6-(dimethylallyl)adenosine (ms(2)i(6)A) at position 37 in tRNAs that read codons beginning with uridine. The polypeptide is tRNA-2-methylthio-N(6)-dimethylallyladenosine synthase (Karelsulcia muelleri (strain GWSS) (Sulcia muelleri)).